The following is a 35-amino-acid chain: U1-theraphotoxin-Hhn1a (35 aa).

3 disulfide bridges follow: Cys2–Cys16, Cys9–Cys21, and Cys15–Cys28.

This sequence belongs to the neurotoxin 10 (Hwtx-1) family. 24 (Hwtx-6) subfamily. As to expression, expressed by the venom gland.

It is found in the secreted. Its function is as follows. Gating-modifier toxin that dose-dependently inhibits inactivation of voltage-gated sodium channels and reduces the peak of sodium current in cockroach DUM neurons. In vivo, reversibly paralyzes cockroaches for several hours, paralyzes rat after intracerebroventricular injection and blocks the neuromuscular transmission of the isolated rat phrenic nerve-diaphragm preparation. This is U1-theraphotoxin-Hhn1a from Cyriopagopus hainanus (Chinese bird spider).